The sequence spans 429 residues: Adenylosuccinate synthetase (429 aa).

Residues 12 to 18 (GDEGKGK) and 40 to 42 (GHT) contribute to the GTP site. Asp13 acts as the Proton acceptor in catalysis. 2 residues coordinate Mg(2+): Asp13 and Gly40. Residues 13 to 16 (DEGK), 38 to 41 (NAGH), Thr128, Arg142, Gln223, Thr238, and Arg302 each bind IMP. Residue His41 is the Proton donor of the active site. 298–304 (TVTGRPR) serves as a coordination point for substrate. Residues Arg304, 330-332 (LLD), and 412-414 (SVG) each bind GTP.

Belongs to the adenylosuccinate synthetase family. In terms of assembly, homodimer. Mg(2+) is required as a cofactor.

Its subcellular location is the cytoplasm. The enzyme catalyses IMP + L-aspartate + GTP = N(6)-(1,2-dicarboxyethyl)-AMP + GDP + phosphate + 2 H(+). The protein operates within purine metabolism; AMP biosynthesis via de novo pathway; AMP from IMP: step 1/2. Plays an important role in the de novo pathway of purine nucleotide biosynthesis. Catalyzes the first committed step in the biosynthesis of AMP from IMP. In Lactobacillus gasseri (strain ATCC 33323 / DSM 20243 / BCRC 14619 / CIP 102991 / JCM 1131 / KCTC 3163 / NCIMB 11718 / NCTC 13722 / AM63), this protein is Adenylosuccinate synthetase.